The following is a 63-amino-acid chain: Lantibiotic mutacin-1140 (63 aa).

The propeptide occupies methionine 1–arginine 41. Positions serine 44–cysteine 48 form a cross-link, lanthionine (Ser-Cys). The residue at position 46 (serine 46) is a 2,3-didehydroalanine (Ser). The segment at residues threonine 49–cysteine 52 is a cross-link (beta-methyllanthionine (Thr-Cys)). Threonine 55 carries the post-translational modification 2,3-didehydrobutyrine. Positions serine 57 to cysteine 62 form a cross-link, lanthionine (Ser-Cys). A cross-link (S-(2-aminovinyl)-D-cysteine (Ser-Cys)) is located at residues serine 60 to cysteine 63.

It belongs to the type A lantibiotic family. Maturation of lantibiotics involves the enzymatic conversion of Thr, and Ser into dehydrated AA and the formation of thioether bonds with cysteine. The C-terminal lanthionine undergoes decarboxylation. This is followed by membrane translocation and cleavage of the modified precursor. In terms of processing, the structure of the 2,3-didehydrobutyrine is not discussed in PubMed:11082191.

In terms of biological role, lanthionine-containing peptide antibiotic (lantibiotic) active on Gram-positive bacteria. The bactericidal activity of lantibiotics is based on depolarization of energized bacterial cytoplasmic membranes, initiated by the formation of aqueous transmembrane pores. This is Lantibiotic mutacin-1140 (lanA) from Streptococcus mutans.